A 134-amino-acid chain; its full sequence is Large ribosomal subunit protein eL14 (134 aa).

It belongs to the eukaryotic ribosomal protein eL14 family. In terms of assembly, component of the large ribosomal subunit (LSU). Mature yeast ribosomes consist of a small (40S) and a large (60S) subunit. The 40S small subunit contains 1 molecule of ribosomal RNA (18S rRNA) and at least 33 different proteins. The large 60S subunit contains 3 rRNA molecules (25S, 5.8S and 5S rRNA) and at least 46 different proteins.

The protein resides in the cytoplasm. It localises to the nucleus. Component of the ribosome, a large ribonucleoprotein complex responsible for the synthesis of proteins in the cell. The small ribosomal subunit (SSU) binds messenger RNAs (mRNAs) and translates the encoded message by selecting cognate aminoacyl-transfer RNA (tRNA) molecules. The large subunit (LSU) contains the ribosomal catalytic site termed the peptidyl transferase center (PTC), which catalyzes the formation of peptide bonds, thereby polymerizing the amino acids delivered by tRNAs into a polypeptide chain. The nascent polypeptides leave the ribosome through a tunnel in the LSU and interact with protein factors that function in enzymatic processing, targeting, and the membrane insertion of nascent chains at the exit of the ribosomal tunnel. This Schizosaccharomyces pombe (strain 972 / ATCC 24843) (Fission yeast) protein is Large ribosomal subunit protein eL14 (rpl14).